Reading from the N-terminus, the 650-residue chain is Chaperone protein DnaK (650 aa).

Position 200 is a phosphothreonine; by autocatalysis (Thr200).

The protein belongs to the heat shock protein 70 family.

Its function is as follows. Acts as a chaperone. The chain is Chaperone protein DnaK from Paraburkholderia phytofirmans (strain DSM 17436 / LMG 22146 / PsJN) (Burkholderia phytofirmans).